A 430-amino-acid polypeptide reads, in one-letter code: Lipoyl synthase, mitochondrial (430 aa).

Residues 1-29 (MASPVPIQRLQAPLRRSLARAAALSTRSY) constitute a mitochondrion transit peptide. A compositionally biased stretch (low complexity) spans 28-58 (SYATIPSGPSSQPTSQESSSAASASAPATKP). Residues 28 to 62 (SYATIPSGPSSQPTSQESSSAASASAPATKPRPTY) are disordered. [4Fe-4S] cluster is bound by residues cysteine 142, cysteine 147, cysteine 153, cysteine 173, cysteine 177, cysteine 180, and serine 390. A Radical SAM core domain is found at 156 to 379 (GSNKAAATAT…RQRALDMGFL (224 aa)).

It belongs to the radical SAM superfamily. Lipoyl synthase family. The cofactor is [4Fe-4S] cluster.

It localises to the mitochondrion. It catalyses the reaction [[Fe-S] cluster scaffold protein carrying a second [4Fe-4S](2+) cluster] + N(6)-octanoyl-L-lysyl-[protein] + 2 oxidized [2Fe-2S]-[ferredoxin] + 2 S-adenosyl-L-methionine + 4 H(+) = [[Fe-S] cluster scaffold protein] + N(6)-[(R)-dihydrolipoyl]-L-lysyl-[protein] + 4 Fe(3+) + 2 hydrogen sulfide + 2 5'-deoxyadenosine + 2 L-methionine + 2 reduced [2Fe-2S]-[ferredoxin]. The protein operates within protein modification; protein lipoylation via endogenous pathway; protein N(6)-(lipoyl)lysine from octanoyl-[acyl-carrier-protein]: step 2/2. In terms of biological role, catalyzes the radical-mediated insertion of two sulfur atoms into the C-6 and C-8 positions of the octanoyl moiety bound to the lipoyl domains of lipoate-dependent enzymes, thereby converting the octanoylated domains into lipoylated derivatives. This is Lipoyl synthase, mitochondrial from Neurospora crassa (strain ATCC 24698 / 74-OR23-1A / CBS 708.71 / DSM 1257 / FGSC 987).